The primary structure comprises 132 residues: Fatty acid-binding protein, adipocyte (132 aa).

Residue cysteine 2 is modified to N-acetylcysteine. Phosphoserine is present on serine 13. Tyrosine 20 is modified (phosphotyrosine; by Tyr-kinases). The Nuclear localization signal motif lies at 22-32 (KEVGVGFATRK). Position 127-129 (127-129 (RVY)) interacts with a fatty acid.

This sequence belongs to the calycin superfamily. Fatty-acid binding protein (FABP) family. As to quaternary structure, monomer. Homodimer. Interacts with PPARG.

It localises to the cytoplasm. The protein localises to the nucleus. In terms of biological role, lipid transport protein in adipocytes. Binds both long chain fatty acids and retinoic acid. Delivers long-chain fatty acids and retinoic acid to their cognate receptors in the nucleus. In Rattus norvegicus (Rat), this protein is Fatty acid-binding protein, adipocyte (Fabp4).